The sequence spans 212 residues: Large ribosomal subunit protein uL1 (212 aa).

It belongs to the universal ribosomal protein uL1 family. As to quaternary structure, part of the 50S ribosomal subunit.

Functionally, binds directly to 23S rRNA. Probably involved in E site tRNA release. Protein L1 is also a translational repressor protein, it controls the translation of its operon by binding to its mRNA. The polypeptide is Large ribosomal subunit protein uL1 (Haloferax volcanii (strain ATCC 29605 / DSM 3757 / JCM 8879 / NBRC 14742 / NCIMB 2012 / VKM B-1768 / DS2) (Halobacterium volcanii)).